Consider the following 376-residue polypeptide: Heme chaperone HemW (376 aa).

A Radical SAM core domain is found at 1–233 (MFTLPPISLY…DKLLKKAGYK (233 aa)). Y10 contacts S-adenosyl-L-methionine. Residues C16, C20, and C23 each contribute to the [4Fe-4S] cluster site. S-adenosyl-L-methionine-binding positions include G66, 67-68 (GT), E99, Q126, R138, and D162.

Belongs to the anaerobic coproporphyrinogen-III oxidase family. HemW subfamily. It depends on [4Fe-4S] cluster as a cofactor.

It localises to the cytoplasm. Probably acts as a heme chaperone, transferring heme to an unknown acceptor. Binds one molecule of heme per monomer, possibly covalently. Binds 1 [4Fe-4S] cluster. The cluster is coordinated with 3 cysteines and an exchangeable S-adenosyl-L-methionine. In Buchnera aphidicola subsp. Acyrthosiphon pisum (strain APS) (Acyrthosiphon pisum symbiotic bacterium), this protein is Heme chaperone HemW.